The primary structure comprises 110 residues: Coiled-coil-helix-coiled-coil-helix domain-containing protein 5 (110 aa).

M1 carries the N-acetylmethionine modification. 2 consecutive CHCH domains span residues 9-52 and 55-97; these read ARYC…PIIR and RQAC…QPPR. 4 consecutive short sequence motifs (cx9C motif) follow at residues 12 to 22, 34 to 44, 58 to 68, and 79 to 89; these read CGRELEQYGQC, CHYLKMSIAQC, CAQPFEAFEEC, and CAEHMRRFLQC. 4 disulfides stabilise this stretch: C12/C44, C22/C34, C58/C89, and C68/C79.

As to quaternary structure, monomer.

The protein localises to the mitochondrion intermembrane space. This chain is Coiled-coil-helix-coiled-coil-helix domain-containing protein 5 (CHCHD5), found in Homo sapiens (Human).